Reading from the N-terminus, the 749-residue chain is Disintegrin and metalloproteinase domain-containing protein 10 (749 aa).

An N-terminal signal peptide occupies residues 1–18 (MGLLRLVFLLSWAASAGG). The propeptide occupies 19–213 (LYGNPLNKYI…SGPVILRKKR (195 aa)). Over 19 to 673 (LYGNPLNKYI…NPELYENIAE (655 aa)) the chain is Extracellular. Residues 170–177 (GGCADSSV) carry the Cysteine switch motif. Position 172 (cysteine 172) interacts with Zn(2+). The Peptidase M12B domain maps to 220–457 (NTCQLFIQTD…KENSCFVESG (238 aa)). Disulfide bonds link cysteine 222-cysteine 314, cysteine 345-cysteine 452, cysteine 400-cysteine 436, cysteine 461-cysteine 496, cysteine 472-cysteine 485, cysteine 474-cysteine 480, cysteine 484-cysteine 516, cysteine 504-cysteine 512, cysteine 511-cysteine 537, cysteine 525-cysteine 544, cysteine 531-cysteine 563, cysteine 556-cysteine 568, cysteine 573-cysteine 599, cysteine 581-cysteine 608, cysteine 583-cysteine 598, cysteine 595-cysteine 640, and cysteine 633-cysteine 646. Residues asparagine 268 and asparagine 279 are each glycosylated (N-linked (GlcNAc...) asparagine). Zn(2+) is bound at residue histidine 384. The active site involves glutamate 385. Residues histidine 388 and histidine 394 each coordinate Zn(2+). The N-linked (GlcNAc...) asparagine glycan is linked to asparagine 440. The region spanning 458–552 (QPICGNGLVE…QCPPSEPREN (95 aa)) is the Disintegrin domain. Asparagine 552 is a glycosylation site (N-linked (GlcNAc...) asparagine). A helical transmembrane segment spans residues 674–694 (WIVAHWWAVLLMGIALIMLMA). Over 695–749 (GFIKICSVHTPSSNPKLPPPKPLPGTLKRRRPPQTTQQPSRQRPRENYQMGHMRH) the chain is Cytoplasmic. The disordered stretch occupies residues 705–749 (PSSNPKLPPPKPLPGTLKRRRPPQTTQQPSRQRPRENYQMGHMRH). The SH3-binding motif lies at 709-716 (PKLPPPKP). The residue at position 720 (threonine 720) is a Phosphothreonine. Positions 723-729 (RRRPPQT) match the SH3-binding motif.

It depends on Zn(2+) as a cofactor. In terms of processing, the precursor is cleaved by furin and PCSK7.

It localises to the membrane. The catalysed reaction is Endopeptidase of broad specificity.. Controls the proteolytic processing of Notch and mediates lateral inhibition during neurogenesis. This Xenopus laevis (African clawed frog) protein is Disintegrin and metalloproteinase domain-containing protein 10 (adam10).